A 326-amino-acid chain; its full sequence is Probable oxidoreductase patJ (326 aa).

The disordered stretch occupies residues 287 to 326 (HGVQPGSVNGSNGHSTGVESKLEQLGSRAQRRVVIDDAGK). Polar residues predominate over residues 292–304 (GSVNGSNGHSTGV).

The protein belongs to the oxidoreductase OpS7 family.

Its subcellular location is the vacuole lumen. It localises to the cytoplasmic vesicle lumen. The protein operates within mycotoxin biosynthesis; patulin biosynthesis. Probable oxidoreductase; part of the gene cluster that mediates the biosynthesis of patulin, an acetate-derived tetraketide mycotoxin produced by several fungal species that shows antimicrobial properties against several bacteria. PatJ acts with patO in the vacuole to convert gentisyl alcohol to isoepoxydon. The pathway begins with the synthesis of 6-methylsalicylic acid by the polyketide synthase (PKS) patK via condensation of acetate and malonate units. The 6-methylsalicylic acid decarboxylase patG then catalyzes the decarboxylation of 6-methylsalicylic acid to yield m-cresol (also known as 3-methylphenol). These first reactions occur in the cytosol. The intermediate m-cresol is then transported into the endoplasmic reticulum where the cytochrome P450 monooxygenase patH converts it to m-hydroxybenzyl alcohol, which is further converted to gentisyl alcohol by the cytochrome P450 monooxygenase patI. The oxidoreductases patJ and patO further convert gentisyl alcohol to isoepoxydon in the vacuole. PatN catalyzes then the transformation of isoepoxydon into phyllostine. The cluster protein patF is responsible for the conversion from phyllostine to neopatulin whereas the alcohol dehydrogenase patD converts neopatulin to E-ascladiol. The steps between isoepoxydon and E-ascladiol occur in the cytosol, and E-ascladiol is probably secreted to the extracellular space by one of the cluster-specific transporters patC or patM. Finally, the secreted patulin synthase patE catalyzes the conversion of E-ascladiol to patulin. This is Probable oxidoreductase patJ from Penicillium expansum (Blue mold rot fungus).